The following is a 515-amino-acid chain: Fatty acyl-CoA reductase 1 (515 aa).

The Cytoplasmic portion of the chain corresponds to 1–465 (MVSIPEYYEG…ARKHLNKLRN (465 aa)). Positions 451-507 (SGLPAARKHLNKLRNIRYGFNTILVILIWRIFIARSQMARNIWYFVVSLCYKFLSYF) are necessary and sufficient for PEX19-mediated localization into peroxisome membrane. The helical transmembrane segment at 466-483 (IRYGFNTILVILIWRIFI) threads the bilayer. Residues 484–515 (ARSQMARNIWYFVVSLCYKFLSYFRASSTMRY) are Peroxisomal-facing.

This sequence belongs to the fatty acyl-CoA reductase family. Interacts with PEX19; PEX19 mediates the targeting of FAR1 to peroxisomes.

The protein resides in the peroxisome membrane. It catalyses the reaction a long-chain fatty acyl-CoA + 2 NADPH + 2 H(+) = a long-chain primary fatty alcohol + 2 NADP(+) + CoA. It carries out the reaction hexadecanoyl-CoA + 2 NADPH + 2 H(+) = hexadecan-1-ol + 2 NADP(+) + CoA. The catalysed reaction is octadecanoyl-CoA + 2 NADPH + 2 H(+) = octadecan-1-ol + 2 NADP(+) + CoA. The enzyme catalyses (9Z)-octadecenoyl-CoA + 2 NADPH + 2 H(+) = (9Z)-octadecen-1-ol + 2 NADP(+) + CoA. It catalyses the reaction (9Z,12Z)-octadecadienoyl-CoA + 2 NADPH + 2 H(+) = (9Z,12Z)-octadecadien-1-ol + 2 NADP(+) + CoA. It carries out the reaction eicosanoyl-CoA + 2 NADPH + 2 H(+) = eicosan-1-ol + 2 NADP(+) + CoA. The catalysed reaction is 16-methylheptadecanoyl-CoA + 2 NADPH + 2 H(+) = 16-methylheptadecan-1-ol + 2 NADP(+) + CoA. The enzyme catalyses 18-methylnonadecanoyl-CoA + 2 NADPH + 2 H(+) = 18-methylnonadecan-1-ol + 2 NADP(+) + CoA. Catalyzes the reduction of saturated and unsaturated C16 or C18 fatty acyl-CoA to fatty alcohols. It plays an essential role in the production of ether lipids/plasmalogens which synthesis requires fatty alcohols. In parallel, it is also required for wax monoesters production since fatty alcohols also constitute a substrate for their synthesis. Functionally, catalyzes the reduction of saturated and unsaturated C16 or C18 fatty acyl-CoA to fatty alcohols. It plays an essential role in the production of ether lipids/plasmalogens which synthesis requires fatty alcohols. In parallel, it is also required for wax monoesters production since fatty alcohols also constitute a substrate for their synthesis. The sequence is that of Fatty acyl-CoA reductase 1 from Rattus norvegicus (Rat).